Consider the following 200-residue polypeptide: Prolactin-2 (200 aa).

A signal peptide spans 1–23 (MRQRRISGSNLMMVLCVVAMCRA). 2 disulfides stabilise this stretch: C64-C173 and C190-C200.

This sequence belongs to the somatotropin/prolactin family.

It localises to the secreted. This Oreochromis mossambicus (Mozambique tilapia) protein is Prolactin-2 (prl2).